A 191-amino-acid chain; its full sequence is HTH-type transcriptional regulator YjdC (191 aa).

One can recognise an HTH tetR-type domain in the interval 1–60; sequence MQREDVLGEALKLLELQGIANTTLEMVAERVDYPLDELRRFWPDKEAILYDALRYLSQQI.

The polypeptide is HTH-type transcriptional regulator YjdC (yjdC) (Escherichia coli (strain K12)).